The following is a 445-amino-acid chain: Aminopeptidase S (445 aa).

An N-terminal signal peptide occupies residues 1–45 (MRPNRFSLRRSPTAVAAVALAAVLAAGAPAAQAAGAAAPTAAAAA). Positions 48 and 49 each coordinate Ca(2+). Residues His-130 and Asp-142 each coordinate Zn(2+). Residue Glu-176 is the Proton acceptor of the active site. The Zn(2+) site is built by Glu-177, Asp-205, and His-292. Residues Cys-290 and Cys-295 are joined by a disulfide bond. Asp-307 and Asp-311 together coordinate Ca(2+). The region spanning 325–445 (GEPPTGEGVF…GYIDSWKLTF (121 aa)) is the P/Homo B domain. Positions 330 to 445 (GEGVFSNTTD…GYIDSWKLTF (116 aa)) are cleaved as a propeptide — removed in mature form.

The protein belongs to the peptidase M28 family. M28A subfamily. Monomer. The cofactor is Ca(2+). It depends on Zn(2+) as a cofactor. Mn(2+) is required as a cofactor. Co(2+) serves as cofactor.

The protein resides in the secreted. The enzyme catalyses Release of an N-terminal amino acid with a preference for large hydrophobic amino-terminus residues.. With respect to regulation, calcium activates the enzyme, inhibited by 1,10-phenanthroline, EDTA and EGTA. End-product inhibited by L-amino acids. Non-competitively inhibited by NaF and NaH(2)PO(4). In terms of biological role, an exopeptidase specific for larger hydrophobic amino acids (especially leucine), no cleavage occurs if the next residue is proline. This Streptomyces griseus subsp. griseus (strain JCM 4626 / CBS 651.72 / NBRC 13350 / KCC S-0626 / ISP 5235) protein is Aminopeptidase S.